A 407-amino-acid polypeptide reads, in one-letter code: Peptidase T (407 aa).

Residue His77 coordinates Zn(2+). Residue Asp79 is part of the active site. A Zn(2+)-binding site is contributed by Asp138. The active-site Proton acceptor is Glu172. Zn(2+) contacts are provided by Glu173, Asp195, and His377.

It belongs to the peptidase M20B family. Zn(2+) serves as cofactor.

It is found in the cytoplasm. The catalysed reaction is Release of the N-terminal residue from a tripeptide.. Cleaves the N-terminal amino acid of tripeptides. The chain is Peptidase T from Aeromonas salmonicida (strain A449).